The following is a 329-amino-acid chain: Prostaglandin reductase 1 (329 aa).

At threonine 18 the chain carries Phosphothreonine. Serine 20 carries the phosphoserine modification. Residues 152–155 (GAVG), lysine 178, tyrosine 193, asparagine 217, 239–245 (CGAISQY), 270–272 (FIV), and asparagine 321 each bind NADP(+). Position 178 is an N6-(2-hydroxyisobutyryl)lysine; alternate (lysine 178). Lysine 178 is subject to N6-acetyllysine; alternate.

This sequence belongs to the NADP-dependent oxidoreductase L4BD family. Monomer or homodimer.

It is found in the cytoplasm. It catalyses the reaction 13,14-dihydro-15-oxo-prostaglandin E1 + NADP(+) = 15-oxoprostaglandin E1 + NADPH + H(+). The catalysed reaction is 13,14-dihydro-15-oxo-prostaglandin E2 + NADP(+) = 15-oxoprostaglandin E2 + NADPH + H(+). The enzyme catalyses 13,14-dihydro-15-oxo-prostaglandin F1alpha + NADP(+) = 15-oxoprostaglandin F1alpha + NADPH + H(+). It carries out the reaction 13,14-dihydro-15-oxo-PGF2alpha + NADP(+) = 15-oxoprostaglandin F2alpha + NADPH + H(+). It catalyses the reaction leukotriene B4 + NADP(+) = 12-oxo-leukotriene B4 + NADPH + H(+). The catalysed reaction is 20-hydroxy-leukotriene B4 + NADP(+) = 12-oxo-20-hydroxy-leukotriene B4 + NADPH + H(+). The enzyme catalyses 6-trans-leukotriene B4 + NADP(+) = 12-oxo-(5S)-hydroxy-(6E,8E,10E,14Z)-eicosatetraenoate + NADPH + H(+). It carries out the reaction (5S,12S)-dihydroxy-(6E,10E,12E,14Z)-eicosatetraenoate + NADP(+) = 12-oxo-(5S)-hydroxy-(6E,8E,10E,14Z)-eicosatetraenoate + NADPH + H(+). It catalyses the reaction an n-alkanal + NADP(+) = an alk-2-enal + NADPH + H(+). The catalysed reaction is hexanal + NADP(+) = (E)-hex-2-enal + NADPH + H(+). The enzyme catalyses octanal + NADP(+) = (2E)-octenal + NADPH + H(+). It carries out the reaction decanal + NADP(+) = (2E)-decenal + NADPH + H(+). It catalyses the reaction dodecanal + NADP(+) = (2E)-dodecenal + NADPH + H(+). The catalysed reaction is 4-hydroxynonanal + NADP(+) = (E)-4-hydroxynon-2-enal + NADPH + H(+). The enzyme catalyses pentan-2-one + NADP(+) = (E)-pent-3-en-2-one + NADPH + H(+). It carries out the reaction nonan-2-one + NADP(+) = (3E)-nonen-2-one + NADPH + H(+). NAD(P)H-dependent oxidoreductase involved in metabolic inactivation of pro- and anti-inflammatory eicosanoids: prostaglandins (PG), leukotrienes (LT) and lipoxins (LX). Catalyzes with high efficiency the reduction of the 13,14 double bond of 15-oxoPGs, including 15-oxo-PGE1, 15-oxo-PGE2, 15-oxo-PGF1-alpha and 15-oxo-PGF2-alpha. Catalyzes with lower efficiency the oxidation of the hydroxyl group at C12 of LTB4 and its derivatives, converting them into biologically less active 12-oxo-LTB4 metabolites. Reduces 15-oxo-LXA4 to 13,14 dihydro-15-oxo-LXA4, enhancing neutrophil recruitment at the inflammatory site. Plays a role in metabolic detoxification of alkenals and ketones. Reduces alpha,beta-unsaturated alkenals and ketones, particularly those with medium-chain length, showing highest affinity toward (2E)-decenal and (3E)-3-nonen-2-one. Inactivates 4-hydroxy-2-nonenal, a cytotoxic lipid constituent of oxidized low-density lipoprotein particles. The polypeptide is Prostaglandin reductase 1 (Ptgr1) (Rattus norvegicus (Rat)).